The primary structure comprises 104 residues: Large ribosomal subunit protein bL21 (104 aa).

It belongs to the bacterial ribosomal protein bL21 family. In terms of assembly, part of the 50S ribosomal subunit. Contacts protein L20.

Functionally, this protein binds to 23S rRNA in the presence of protein L20. The sequence is that of Large ribosomal subunit protein bL21 from Streptococcus pyogenes serotype M1.